The following is an 891-amino-acid chain: 26S proteasome non-ATPase regulatory subunit 2 homolog B (891 aa).

The interval Met1–Asp43 is disordered. Residues Ala14–Glu37 are compositionally biased toward basic and acidic residues. PC repeat units follow at residues Ser414–Ala447, Gly448–Ile484, Gly485–Val519, Phe522–Gly556, Leu565–Lys594, Leu674–Met705, and Ala724–Ser739.

It belongs to the proteasome subunit S2 family. Component of the 19S regulatory particle (RP/PA700) base subcomplex of the 26S proteasome. The 26S proteasome is composed of a core protease (CP), known as the 20S proteasome, capped at one or both ends by the 19S regulatory particle (RP/PA700). The RP/PA700 complex is composed of at least 17 different subunits in two subcomplexes, the base and the lid, which form the portions proximal and distal to the 20S proteolytic core, respectively. In terms of processing, ubiquitinated. Expressed in stems, leaves, buds, flowers, siliques and developing seeds.

In terms of biological role, acts as a regulatory subunit of the 26 proteasome which is involved in the ATP-dependent degradation of ubiquitinated proteins. This Arabidopsis thaliana (Mouse-ear cress) protein is 26S proteasome non-ATPase regulatory subunit 2 homolog B (RPN1B).